A 416-amino-acid chain; its full sequence is MSAEIICVGTELLLGDILNGNAQYLAQQLAQLGIPHYHQTVVGDNPDRIKQVIEIAISRANILIFTGGLGPTPDDLTCETIADFFGSPLVESPEIIEDITQKFAQRGRVMTPSNRKQALIPQGADILPNPTGTAPGIIWEPRPDMTIFTFPGVPSEMHRMWQETAVPFLKNQGWGQEIIYSRSLKFWGIGESALAEKVTAYLNLPNPTVAPYAGKGEVRLRVSAKAPSEVAAEALIAPVEKQIKDIAGLDFYGVNHDSLASVVGELLRSSGETLSVAESCTGGLLGQMLTEISGSSDYFWGGVISYDNSVKAGLLGVNPEDLDKLGAVSDTVAEQMAIGVKTRLSTTWALSITGIAGPNGGTETKPVGLVYIGLAGPGDEVTSFKYNFGTMRDRSFIRHLSACTALDLLRRRLLTR.

Belongs to the CinA family.

This chain is CinA-like protein, found in Trichormus variabilis (strain ATCC 29413 / PCC 7937) (Anabaena variabilis).